The sequence spans 183 residues: UPF0340 protein LCA_1354 (183 aa).

It belongs to the UPF0340 family.

The chain is UPF0340 protein LCA_1354 from Latilactobacillus sakei subsp. sakei (strain 23K) (Lactobacillus sakei subsp. sakei).